Reading from the N-terminus, the 124-residue chain is Small ribosomal subunit protein uS12 (124 aa).

Asp89 is modified (3-methylthioaspartic acid).

The protein belongs to the universal ribosomal protein uS12 family. As to quaternary structure, part of the 30S ribosomal subunit. Contacts proteins S8 and S17. May interact with IF1 in the 30S initiation complex.

Its function is as follows. With S4 and S5 plays an important role in translational accuracy. Interacts with and stabilizes bases of the 16S rRNA that are involved in tRNA selection in the A site and with the mRNA backbone. Located at the interface of the 30S and 50S subunits, it traverses the body of the 30S subunit contacting proteins on the other side and probably holding the rRNA structure together. The combined cluster of proteins S8, S12 and S17 appears to hold together the shoulder and platform of the 30S subunit. The polypeptide is Small ribosomal subunit protein uS12 (Nitratiruptor sp. (strain SB155-2)).